The chain runs to 284 residues: L-ribulose-5-phosphate 3-epimerase UlaE (284 aa).

It belongs to the L-ribulose-5-phosphate 3-epimerase family.

The enzyme catalyses L-ribulose 5-phosphate = L-xylulose 5-phosphate. It participates in cofactor degradation; L-ascorbate degradation; D-xylulose 5-phosphate from L-ascorbate: step 3/4. In terms of biological role, catalyzes the isomerization of L-xylulose-5-phosphate to L-ribulose-5-phosphate. Is involved in the anaerobic L-ascorbate utilization. The polypeptide is L-ribulose-5-phosphate 3-epimerase UlaE (Salmonella paratyphi A (strain AKU_12601)).